We begin with the raw amino-acid sequence, 440 residues long: Light-independent protochlorophyllide reductase subunit B (440 aa).

Asp36 serves as a coordination point for [4Fe-4S] cluster. 427-428 (KD) lines the substrate pocket.

The protein belongs to the ChlB/BchB/BchZ family. Protochlorophyllide reductase is composed of three subunits; ChlL, ChlN and ChlB. Forms a heterotetramer of two ChlB and two ChlN subunits. It depends on [4Fe-4S] cluster as a cofactor.

It localises to the plastid. The protein localises to the cyanelle. The catalysed reaction is chlorophyllide a + oxidized 2[4Fe-4S]-[ferredoxin] + 2 ADP + 2 phosphate = protochlorophyllide a + reduced 2[4Fe-4S]-[ferredoxin] + 2 ATP + 2 H2O. Its pathway is porphyrin-containing compound metabolism; chlorophyll biosynthesis (light-independent). Component of the dark-operative protochlorophyllide reductase (DPOR) that uses Mg-ATP and reduced ferredoxin to reduce ring D of protochlorophyllide (Pchlide) to form chlorophyllide a (Chlide). This reaction is light-independent. The NB-protein (ChlN-ChlB) is the catalytic component of the complex. The chain is Light-independent protochlorophyllide reductase subunit B from Cyanophora paradoxa.